The primary structure comprises 129 residues: M-zodatoxin-Lt8c (129 aa).

The signal sequence occupies residues 1-20 (MKYFVVALALVAAFACIAES). Residues 21-60 (KPAESEHELAEVEEENELADLEDAVWLEHLADLSDLEEAR) constitute a propeptide that is removed on maturation. A Processing quadruplet motif motif is present at residues 57-60 (EEAR).

Post-translationally, cleavage of the propeptide depends on the processing quadruplet motif (XXXR, with at least one of X being E). Expressed by the venom gland.

The protein resides in the secreted. Its function is as follows. Insecticidal, cytolytic and antimicrobial peptide. Forms voltage-dependent, ion-permeable channels in membranes. At high concentration causes cell membrane lysis. This Lachesana tarabaevi (Spider) protein is M-zodatoxin-Lt8c (cit 1-3).